We begin with the raw amino-acid sequence, 165 residues long: Xanthine-guanine phosphoribosyltransferase (165 aa).

Residues 41–42 (RG) and 98–106 (DDLTDTGKT) contribute to the 5-phospho-alpha-D-ribose 1-diphosphate site. A Mg(2+)-binding site is contributed by Asp99. Guanine-binding residues include Asp102 and Ile145. The xanthine site is built by Asp102 and Ile145. GMP contacts are provided by residues 102 to 106 (DTGKT) and 144 to 145 (WI).

The protein belongs to the purine/pyrimidine phosphoribosyltransferase family. XGPT subfamily. As to quaternary structure, homotetramer. Mg(2+) is required as a cofactor.

The protein localises to the cell inner membrane. The catalysed reaction is GMP + diphosphate = guanine + 5-phospho-alpha-D-ribose 1-diphosphate. It catalyses the reaction XMP + diphosphate = xanthine + 5-phospho-alpha-D-ribose 1-diphosphate. The enzyme catalyses IMP + diphosphate = hypoxanthine + 5-phospho-alpha-D-ribose 1-diphosphate. The protein operates within purine metabolism; GMP biosynthesis via salvage pathway; GMP from guanine: step 1/1. It functions in the pathway purine metabolism; XMP biosynthesis via salvage pathway; XMP from xanthine: step 1/1. Its function is as follows. Purine salvage pathway enzyme that catalyzes the transfer of the ribosyl-5-phosphate group from 5-phospho-alpha-D-ribose 1-diphosphate (PRPP) to the N9 position of the 6-oxopurines guanine and xanthine to form the corresponding ribonucleotides GMP (guanosine 5'-monophosphate) and XMP (xanthosine 5'-monophosphate), with the release of PPi. To a lesser extent, also acts on hypoxanthine. This chain is Xanthine-guanine phosphoribosyltransferase, found in Brucella anthropi (strain ATCC 49188 / DSM 6882 / CCUG 24695 / JCM 21032 / LMG 3331 / NBRC 15819 / NCTC 12168 / Alc 37) (Ochrobactrum anthropi).